Here is an 82-residue protein sequence, read N- to C-terminus: MIECSWLVISAGVDSSDLAKRGESLIRQSSNRYLTTVRIAFRAKQRRFDDFDGLLEESSVKPVQRAIVELSDEQDQPDLLPG.

The protein belongs to the RNA polymerase subunit omega family. In cyanobacteria the RNAP catalytic core is composed of 2 alpha, 1 beta, 1 beta', 1 gamma and 1 omega subunit. When a sigma factor is associated with the core the holoenzyme is formed, which can initiate transcription.

It catalyses the reaction RNA(n) + a ribonucleoside 5'-triphosphate = RNA(n+1) + diphosphate. Its function is as follows. Promotes RNA polymerase assembly. Latches the N- and C-terminal regions of the beta' subunit thereby facilitating its interaction with the beta and alpha subunits. The chain is DNA-directed RNA polymerase subunit omega from Synechococcus sp. (strain CC9902).